A 229-amino-acid chain; its full sequence is Endonuclease V (229 aa).

It belongs to the endonuclease V family.

It localises to the cytoplasm. It carries out the reaction Endonucleolytic cleavage at apurinic or apyrimidinic sites to products with a 5'-phosphate.. Functionally, DNA repair enzyme involved in the repair of deaminated bases. Selectively cleaves double-stranded DNA at the second phosphodiester bond 3' to a deoxyinosine leaving behind the intact lesion on the nicked DNA. This is Endonuclease V from Methanopyrus kandleri (strain AV19 / DSM 6324 / JCM 9639 / NBRC 100938).